A 952-amino-acid polypeptide reads, in one-letter code: Respiratory burst oxidase homolog protein E (952 aa).

Residues M1 to R392 lie on the Cytoplasmic side of the membrane. EF-hand-like regions lie at residues S211 to D219 and R245 to E256. EF-hand domains lie at S268 to A303 and Q312 to Y347. Residues D281, N283, D285, K287, and E292 each coordinate Ca(2+). The chain crosses the membrane as a helical span at residues S393–E413. At Y414 to K475 the chain is on the extracellular side. The Ferric oxidoreductase domain maps to K431–I587. The chain crosses the membrane as a helical span at residues I476–D496. Residues F497–G531 are Cytoplasmic-facing. A helical membrane pass occupies residues I532–F552. The Extracellular portion of the chain corresponds to R553–Y574. Residues T575–F595 form a helical membrane-spanning segment. Over A596–T603 the chain is Cytoplasmic. The chain crosses the membrane as a helical span at residues T604–L621. Over R622 to R750 the chain is Extracellular. An FAD-binding FR-type domain is found at S626 to D748. A helical membrane pass occupies residues S751–L771. Topologically, residues K772–F952 are cytoplasmic.

This sequence belongs to the RBOH (TC 5.B.1.3) family. As to quaternary structure, monomer and homodimer. In terms of tissue distribution, expressed in roots, inflorescences, leaves and stems.

The protein localises to the membrane. Its function is as follows. Calcium-dependent NADPH oxidase that generates superoxide. The sequence is that of Respiratory burst oxidase homolog protein E (RBOHE) from Arabidopsis thaliana (Mouse-ear cress).